We begin with the raw amino-acid sequence, 357 residues long: Biotin synthase (357 aa).

The disordered stretch occupies residues 1–27 (MTTAETKPATETGENAGTTGTAGTAAT). The span at 9 to 27 (ATETGENAGTTGTAGTAAT) shows a compositional bias: low complexity. Residues 78 to 303 (DAVEMEGIIS…RQLLRFAGGR (226 aa)) enclose the Radical SAM core domain. Residues Cys93, Cys97, and Cys100 each coordinate [4Fe-4S] cluster. Positions 136, 228, and 298 each coordinate [2Fe-2S] cluster.

Belongs to the radical SAM superfamily. Biotin synthase family. In terms of assembly, homodimer. [4Fe-4S] cluster serves as cofactor. The cofactor is [2Fe-2S] cluster.

It catalyses the reaction (4R,5S)-dethiobiotin + (sulfur carrier)-SH + 2 reduced [2Fe-2S]-[ferredoxin] + 2 S-adenosyl-L-methionine = (sulfur carrier)-H + biotin + 2 5'-deoxyadenosine + 2 L-methionine + 2 oxidized [2Fe-2S]-[ferredoxin]. The protein operates within cofactor biosynthesis; biotin biosynthesis; biotin from 7,8-diaminononanoate: step 2/2. In terms of biological role, catalyzes the conversion of dethiobiotin (DTB) to biotin by the insertion of a sulfur atom into dethiobiotin via a radical-based mechanism. This is Biotin synthase from Corynebacterium jeikeium (strain K411).